Reading from the N-terminus, the 96-residue chain is Large ribosomal subunit protein bL27 (96 aa).

The interval 13-33 (KGGGSTANGRNSAGRRLGAKA) is disordered.

Belongs to the bacterial ribosomal protein bL27 family.

The chain is Large ribosomal subunit protein bL27 from Lactobacillus acidophilus (strain ATCC 700396 / NCK56 / N2 / NCFM).